We begin with the raw amino-acid sequence, 323 residues long: Serine/threonine-protein phosphatase PP1-gamma catalytic subunit (323 aa).

Residues D64, H66, D92, and N124 each coordinate Mn(2+). The Proton donor role is filled by H125. Mn(2+)-binding residues include H173 and H248. A disordered region spans residues 300-323 (EKKKPNASRPVTPPRGMITKQAKK).

The protein belongs to the PPP phosphatase family. PP-1 subfamily. As to quaternary structure, PP1 comprises a catalytic subunit, ppp1c1, ppp1cb or ppp1cc, which is folded into its native form by inhibitor 2 and glycogen synthetase kinase 3, and then is complexed to one or several targeting or regulatory subunits. It depends on Mn(2+) as a cofactor.

It localises to the cytoplasm. It is found in the nucleus. The protein resides in the cleavage furrow. The protein localises to the nucleolus. Its subcellular location is the nucleoplasm. It localises to the chromosome. It is found in the centromere. The protein resides in the kinetochore. The protein localises to the nucleus speckle. Its subcellular location is the midbody. It localises to the mitochondrion. It is found in the cytoskeleton. The protein resides in the microtubule organizing center. It catalyses the reaction O-phospho-L-seryl-[protein] + H2O = L-seryl-[protein] + phosphate. The catalysed reaction is O-phospho-L-threonyl-[protein] + H2O = L-threonyl-[protein] + phosphate. Its function is as follows. Protein phosphatase 1 (PP1) is essential for cell division, and participates in the regulation of glycogen metabolism, muscle contractility and protein synthesis. Promotes nuclear envelope reassembly by targeting nuclear membrane vesicles to chromatin at the end of mitosis. Acts by dephosphorylating membrane proteins such as lamin B receptor (lbr) to regulate the binding of membrane proteins to chromatin. This Xenopus tropicalis (Western clawed frog) protein is Serine/threonine-protein phosphatase PP1-gamma catalytic subunit.